The primary structure comprises 299 residues: Porphobilinogen deaminase (299 aa).

Cys-234 is modified (S-(dipyrrolylmethanemethyl)cysteine).

The protein belongs to the HMBS family. In terms of assembly, monomer. The cofactor is dipyrromethane.

The enzyme catalyses 4 porphobilinogen + H2O = hydroxymethylbilane + 4 NH4(+). The protein operates within porphyrin-containing compound metabolism; protoporphyrin-IX biosynthesis; coproporphyrinogen-III from 5-aminolevulinate: step 2/4. Its function is as follows. Tetrapolymerization of the monopyrrole PBG into the hydroxymethylbilane pre-uroporphyrinogen in several discrete steps. In Corynebacterium efficiens (strain DSM 44549 / YS-314 / AJ 12310 / JCM 11189 / NBRC 100395), this protein is Porphobilinogen deaminase.